Here is a 44-residue protein sequence, read N- to C-terminus: Photosystem I reaction center subunit IX (44 aa).

A helical membrane pass occupies residues 7–27 (YLSVAPVLATLWFGSLAGLLI).

This sequence belongs to the PsaJ family.

It is found in the plastid. The protein localises to the chloroplast thylakoid membrane. In terms of biological role, may help in the organization of the PsaE and PsaF subunits. This is Photosystem I reaction center subunit IX from Piper cenocladum (Ant piper).